The chain runs to 184 residues: Shikimate kinase (184 aa).

Residue 17 to 22 participates in ATP binding; that stretch reads GAGKTT. T21 provides a ligand contact to Mg(2+). D39, R63, and G85 together coordinate substrate. R123 provides a ligand contact to ATP. R142 is a substrate binding site.

It belongs to the shikimate kinase family. As to quaternary structure, monomer. Mg(2+) serves as cofactor.

The protein resides in the cytoplasm. It carries out the reaction shikimate + ATP = 3-phosphoshikimate + ADP + H(+). It functions in the pathway metabolic intermediate biosynthesis; chorismate biosynthesis; chorismate from D-erythrose 4-phosphate and phosphoenolpyruvate: step 5/7. Functionally, catalyzes the specific phosphorylation of the 3-hydroxyl group of shikimic acid using ATP as a cosubstrate. This is Shikimate kinase from Burkholderia lata (strain ATCC 17760 / DSM 23089 / LMG 22485 / NCIMB 9086 / R18194 / 383).